The sequence spans 214 residues: Reticulon-3-B (214 aa).

The interval 1–22 (MAETSGPQSSHISSSSAGDKGS) is disordered. The 189-residue stretch at 26 to 214 (VRDLLYWRDV…LPGALKKKSE (189 aa)) folds into the Reticulon domain. Transmembrane regions (helical) follow at residues 46–66 (MVLL…YLVL) and 150–170 (TYIG…LLAF).

In terms of assembly, homodimer.

It is found in the endoplasmic reticulum membrane. The protein localises to the golgi apparatus membrane. Functionally, may be involved in membrane trafficking in the early secretory pathway. This chain is Reticulon-3-B (rtn3-b), found in Xenopus laevis (African clawed frog).